A 472-amino-acid polypeptide reads, in one-letter code: Tryptophanase (472 aa).

Lys-270 carries the post-translational modification N6-(pyridoxal phosphate)lysine.

The protein belongs to the beta-eliminating lyase family. In terms of assembly, homotetramer. Pyridoxal 5'-phosphate serves as cofactor.

It carries out the reaction L-tryptophan + H2O = indole + pyruvate + NH4(+). Its pathway is amino-acid degradation; L-tryptophan degradation via pyruvate pathway; indole and pyruvate from L-tryptophan: step 1/1. This Haemophilus influenzae protein is Tryptophanase (tnaA).